We begin with the raw amino-acid sequence, 259 residues long: Global transcriptional regulator CodY (259 aa).

Residues 1 to 155 (MDLLTRTRKI…GATVVGMEIL (155 aa)) form a GAF domain region. The H-T-H motif DNA-binding region spans 203-222 (ASKIADRVGITRSVIVNALR). S215 is subject to Phosphoserine.

This sequence belongs to the CodY family.

Its subcellular location is the cytoplasm. Its function is as follows. DNA-binding global transcriptional regulator which is involved in the adaptive response to starvation and acts by directly or indirectly controlling the expression of numerous genes in response to nutrient availability. During rapid exponential growth, CodY is highly active and represses genes whose products allow adaptation to nutrient depletion. This chain is Global transcriptional regulator CodY, found in Shouchella clausii (strain KSM-K16) (Alkalihalobacillus clausii).